We begin with the raw amino-acid sequence, 927 residues long: F-box only protein 11 (927 aa).

The interval 1 to 132 (MNSVRAANRR…STSTTENFGH (132 aa)) is disordered. Residues 7–16 (ANRRPRRVSR) show a composition bias toward basic residues. A compositionally biased stretch (low complexity) spans 17–27 (PRPVQQQQQQP). A compositionally biased stretch (pro residues) spans 28 to 68 (PQQPPPQPPQQQPPQQQPPPPPQQQQQQQPPPPPPPPPPLP). Over residues 114–129 (PTKNSMEGASTSTTEN) the composition is skewed to polar residues. An F-box domain is found at 153–199 (QYLQEKLPDEVVLKIFSYLLEQDLCRAACVCKRFSELANDPILWKRL). 19 PbH1 repeats span residues 395 to 417 (GACP…YITD), 418 to 440 (HAQG…WVKN), 441 to 463 (HGNP…FTFD), 464 to 486 (HGMG…EVKA), 487 to 509 (YANP…YVHE), 510 to 532 (KGRG…WITS), 533 to 555 (NSDP…YIFG), 556 to 578 (DGRG…QIRT), 579 to 601 (NSCP…YVHE), 602 to 624 (KGQG…WVTT), 625 to 647 (GSTP…YFYD), 648 to 670 (NGHG…QIRT), 671 to 693 (GSNP…LVYN), 694 to 716 (SGLG…WIKT), 717 to 739 (DSNP…CIFN), 740 to 762 (GGRG…LIST), 763 to 785 (NSHP…EITN), 786 to 808 (HATA…FLAS), and 809 to 830 (GVNV…EKAV). A UBR-type zinc finger spans residues 833–904 (GQCLYKISSY…LSNPCTLAGE (72 aa)).

As to quaternary structure, component of the SCF(FBXO11) complex consisting of CUL1, RBX1, SKP1 and FBXO11. Interacts with CIITA. As to expression, isoform 5 is expressed in keratinocytes, fibroblasts and melanocytes.

Its subcellular location is the nucleus. The protein resides in the chromosome. It functions in the pathway protein modification; protein ubiquitination. Its function is as follows. Substrate recognition component of a SCF (SKP1-CUL1-F-box protein) E3 ubiquitin-protein ligase complex which mediates the ubiquitination and subsequent proteasomal degradation of target proteins, such as DTL/CDT2, BCL6, SNAI1 and PRDM1/BLIMP1. The SCF(FBXO11) complex mediates ubiquitination and degradation of BCL6, thereby playing a role in the germinal center B-cells terminal differentiation toward memory B-cells and plasma cells. The SCF(FBXO11) complex also mediates ubiquitination and degradation of DTL, an important step for the regulation of TGF-beta signaling, cell migration and the timing of the cell-cycle progression and exit. The SCF(FBXO11) complex also catalyzes ubiquitination and degradation of GSK3B-phosphorylated SNAI1. Binds to and neddylates phosphorylated p53/TP53, inhibiting its transcriptional activity. Plays a role in the regulatiom of erythropoiesis but not myelopoiesis or megakaryopoiesis. Mechanistically, activates erythroid genes by mediating the degradation of BAHD1, a heterochromatin-associated protein that recruits corepressors to H3K27me3 marks. Participates in macrophage cell death and inflammation in response to bacterial toxins by regulating the expression of complement 5a receptor 1/C5AR1 and IL-1beta. Acts as a critical regulator to determine the level of MHC-II by mediating the recognition of degron at the P/S/T domain of CIITA leading to its ubiquitination and subsequent degradation via the proteasome. Participates in the antiviral repsonse by initiating the activation of TBK1-IRF3-IFN-I axis. Mediates the 'Lys-63'-linked ubiquitination of TRAF3 to strengthen the interaction between TRAF3 and TBK1. The sequence is that of F-box only protein 11 from Homo sapiens (Human).